A 483-amino-acid polypeptide reads, in one-letter code: Glutamyl-tRNA(Gln) amidotransferase subunit A (483 aa).

Catalysis depends on charge relay system residues Lys-77 and Ser-152. Ser-176 serves as the catalytic Acyl-ester intermediate.

This sequence belongs to the amidase family. GatA subfamily. Heterotrimer of A, B and C subunits.

The catalysed reaction is L-glutamyl-tRNA(Gln) + L-glutamine + ATP + H2O = L-glutaminyl-tRNA(Gln) + L-glutamate + ADP + phosphate + H(+). Functionally, allows the formation of correctly charged Gln-tRNA(Gln) through the transamidation of misacylated Glu-tRNA(Gln) in organisms which lack glutaminyl-tRNA synthetase. The reaction takes place in the presence of glutamine and ATP through an activated gamma-phospho-Glu-tRNA(Gln). The protein is Glutamyl-tRNA(Gln) amidotransferase subunit A of Listeria monocytogenes serotype 4b (strain CLIP80459).